Consider the following 383-residue polypeptide: Succinyl-diaminopimelate desuccinylase (383 aa).

Histidine 74 serves as a coordination point for Zn(2+). Aspartate 76 is an active-site residue. Position 107 (aspartate 107) interacts with Zn(2+). Glutamate 141 (proton acceptor) is an active-site residue. Glutamate 142, glutamate 170, and histidine 356 together coordinate Zn(2+).

It belongs to the peptidase M20A family. DapE subfamily. As to quaternary structure, homodimer. Zn(2+) serves as cofactor. Co(2+) is required as a cofactor.

The enzyme catalyses N-succinyl-(2S,6S)-2,6-diaminopimelate + H2O = (2S,6S)-2,6-diaminopimelate + succinate. The protein operates within amino-acid biosynthesis; L-lysine biosynthesis via DAP pathway; LL-2,6-diaminopimelate from (S)-tetrahydrodipicolinate (succinylase route): step 3/3. Functionally, catalyzes the hydrolysis of N-succinyl-L,L-diaminopimelic acid (SDAP), forming succinate and LL-2,6-diaminopimelate (DAP), an intermediate involved in the bacterial biosynthesis of lysine and meso-diaminopimelic acid, an essential component of bacterial cell walls. This chain is Succinyl-diaminopimelate desuccinylase, found in Ralstonia nicotianae (strain ATCC BAA-1114 / GMI1000) (Ralstonia solanacearum).